The primary structure comprises 213 residues: Superoxide dismutase [Fe] (213 aa).

Residues histidine 28, histidine 82, aspartate 164, and histidine 168 each coordinate Fe cation.

The protein belongs to the iron/manganese superoxide dismutase family. Homotetramer. It depends on Fe cation as a cofactor.

The enzyme catalyses 2 superoxide + 2 H(+) = H2O2 + O2. In terms of biological role, destroys superoxide anion radicals which are normally produced within the cells and which are toxic to biological systems. The protein is Superoxide dismutase [Fe] (sodB) of Aquifex pyrophilus.